The following is a 276-amino-acid chain: MAIRKMKPITNGTRHMSRLVNDELDKVRPEKSLTVPLKSAYGRDNYGHRTCRDRQKGHKRLYRIIDFKRNKLDVPARVATIEYDPNRSANIALLFYVDGEKRYILAPKGLKKGDIVSAGSKAEIKPGNALKLKDMPVGVQIHNIELQRGKGGQLVRSAGTAARLVAKEGTYCHVELPSGELRLIHGECMATVGEVGNSEHNLVNIGKAGRARHMGKRPHVRGAVMNPVDHPHGGGEGKNSVGRKSPLTPWGKPALGIKTRGRKTSDKFIVRRRNEK.

A disordered region spans residues A223–K276. Over residues K263–K276 the composition is skewed to basic and acidic residues.

Belongs to the universal ribosomal protein uL2 family. Part of the 50S ribosomal subunit. Forms a bridge to the 30S subunit in the 70S ribosome.

In terms of biological role, one of the primary rRNA binding proteins. Required for association of the 30S and 50S subunits to form the 70S ribosome, for tRNA binding and peptide bond formation. It has been suggested to have peptidyltransferase activity; this is somewhat controversial. Makes several contacts with the 16S rRNA in the 70S ribosome. The sequence is that of Large ribosomal subunit protein uL2 from Fusobacterium nucleatum subsp. nucleatum (strain ATCC 25586 / DSM 15643 / BCRC 10681 / CIP 101130 / JCM 8532 / KCTC 2640 / LMG 13131 / VPI 4355).